Consider the following 118-residue polypeptide: Basic phospholipase A2 PA-13 (118 aa).

7 disulfides stabilise this stretch: Cys-11-Cys-71, Cys-27-Cys-117, Cys-29-Cys-45, Cys-44-Cys-98, Cys-51-Cys-91, Cys-60-Cys-84, and Cys-78-Cys-89. Positions 28, 30, and 32 each coordinate Ca(2+). His-48 is an active-site residue. Asp-49 serves as a coordination point for Ca(2+). Residue Asp-92 is part of the active site.

The protein belongs to the phospholipase A2 family. Group I subfamily. D49 sub-subfamily. Requires Ca(2+) as cofactor. In terms of tissue distribution, expressed by the venom gland.

The protein localises to the secreted. It carries out the reaction a 1,2-diacyl-sn-glycero-3-phosphocholine + H2O = a 1-acyl-sn-glycero-3-phosphocholine + a fatty acid + H(+). Its function is as follows. PLA2 catalyzes the calcium-dependent hydrolysis of the 2-acyl groups in 3-sn-phosphoglycerides. The protein is Basic phospholipase A2 PA-13 of Pseudechis australis (Mulga snake).